Consider the following 302-residue polypeptide: Nucleotide-binding protein SERP0433 (302 aa).

18–25 (GMSGAGKS) serves as a coordination point for ATP. GTP is bound at residue 69–72 (DLRG).

The protein belongs to the RapZ-like family.

Its function is as follows. Displays ATPase and GTPase activities. This Staphylococcus epidermidis (strain ATCC 35984 / DSM 28319 / BCRC 17069 / CCUG 31568 / BM 3577 / RP62A) protein is Nucleotide-binding protein SERP0433.